Here is an 878-residue protein sequence, read N- to C-terminus: Phosphoenolpyruvate carboxylase (878 aa).

Catalysis depends on residues His137 and Lys545.

Belongs to the PEPCase type 1 family. It depends on Mg(2+) as a cofactor.

The catalysed reaction is oxaloacetate + phosphate = phosphoenolpyruvate + hydrogencarbonate. In terms of biological role, forms oxaloacetate, a four-carbon dicarboxylic acid source for the tricarboxylic acid cycle. The sequence is that of Phosphoenolpyruvate carboxylase from Yersinia pseudotuberculosis serotype O:1b (strain IP 31758).